The primary structure comprises 605 residues: Alpha-amylase (605 aa).

Positions 1-33 (MGVRRSLAALLAALLGCATSLVALTVAASPAHA) are cleaved as a signal peptide. Positions 130 and 189 each coordinate Ca(2+). The Nucleophile role is filled by Asp-219. Ca(2+) is bound at residue His-223. The Proton donor role is filled by Glu-253. A CBM20 domain is found at 500–605 (GDDCTTVTAR…CSQNFYDSWR (106 aa)).

This sequence belongs to the glycosyl hydrolase 13 family. As to quaternary structure, monomer. Ca(2+) serves as cofactor.

It carries out the reaction Endohydrolysis of (1-&gt;4)-alpha-D-glucosidic linkages in polysaccharides containing three or more (1-&gt;4)-alpha-linked D-glucose units.. This is Alpha-amylase (tam) from Thermomonospora curvata.